The chain runs to 471 residues: Secretogranin-3 (471 aa).

Residues 1–22 form the signal peptide; the sequence is MGFLWTGTWIVVLMLHSSPIQA. Disordered regions lie at residues 23 to 72 and 86 to 105; these read FPKP…ESNY and EKEK…NDNK. Over residues 32 to 45 the composition is skewed to basic and acidic residues; the sequence is KPLHNRELSAERPL. Serine 40 carries the phosphoserine modification. Serine 40 carries an O-linked (Xyl...) (chondroitin sulfate) serine glycan. Asparagine 71 carries an N-linked (GlcNAc...) asparagine glycan. Residues 86–96 show a composition bias toward basic and acidic residues; sequence EKEKNEKERQS. An N-linked (GlcNAc...) asparagine glycan is attached at asparagine 353. Positions 357 to 409 are disordered; that stretch reads LFAVPSEKSHEETDSTKEEAAKMEKEYGTLKDSTKDDDSNPRGKTDEHKGKTE. Positions 363-409 are enriched in basic and acidic residues; that stretch reads EKSHEETDSTKEEAAKMEKEYGTLKDSTKDDDSNPRGKTDEHKGKTE. Position 365 is a phosphoserine (serine 365).

As to quaternary structure, interacts with CHGA. Interacts with secretogranin II/SCG2. Interacts (via C-terminus) with CPE.

It is found in the cytoplasmic vesicle. Its subcellular location is the secretory vesicle. The protein resides in the secretory vesicle membrane. The protein localises to the secreted. Functionally, member of the granin protein family that regulates the biogenesis of secretory granules. Acts as a sorting receptor for intragranular proteins including chromogranin A/CHGA. May also play a role in angiogenesis. Promotes endothelial proliferation, migration and tube formation through MEK/ERK signaling pathway. This is Secretogranin-3 (SCG3) from Bos taurus (Bovine).